The primary structure comprises 289 residues: Bidirectional sugar transporter SWEET15 (289 aa).

The Extracellular portion of the chain corresponds to 1 to 10; it reads MAMAMANHHT. The chain crosses the membrane as a helical span at residues 11 to 31; sequence LGLIFGILGNIISFLVYFAPA. The MtN3/slv 1 domain maps to 14-100; that stretch reads IFGILGNIIS…LYFFYAPMQA (87 aa). The Cytoplasmic portion of the chain corresponds to 32–45; the sequence is PTFYRIYKRKSAEG. Residues 46 to 66 form a helical membrane-spanning segment; sequence FHSLPYIVALFSAMLWLYYAL. The Extracellular segment spans residues 67–70; the sequence is LKKD. The helical transmembrane segment at 71 to 91 threads the bilayer; sequence AFLLITINSFGCAIESFYILL. At 92 to 106 the chain is on the cytoplasmic side; it reads YFFYAPMQAKKQTLK. The chain crosses the membrane as a helical span at residues 107 to 127; it reads VVISLNVGVFSILVVLIQFLL. Residues 128–134 are Extracellular-facing; the sequence is KGSNRIN. Residues 135 to 155 form a helical membrane-spanning segment; the sequence is VFGWICASFSVAVFAAPLSIV. The MtN3/slv 2 domain maps to 136–219; that stretch reads FGWICASFSV…VLYGFYRNAG (84 aa). At 156–167 the chain is on the cytoplasmic side; it reads AKVIRTKSVEFM. The helical transmembrane segment at 168-188 threads the bilayer; the sequence is PFSLSFFLTLSAIMWFAYGLL. The Extracellular portion of the chain corresponds to 189-193; the sequence is KNDPC. The helical transmembrane segment at 194-214 threads the bilayer; the sequence is VAIPNILGVILGLVQMVLYGF. Topologically, residues 215–289 are cytoplasmic; that stretch reads YRNAGKEKME…GELQPNGSTV (75 aa). A disordered region spans residues 249 to 289; sequence GAQQNGIKKSGSEDVKDDEETGNREKSTENSGELQPNGSTV. The span at 277 to 289 shows a compositional bias: polar residues; that stretch reads ENSGELQPNGSTV.

This sequence belongs to the SWEET sugar transporter family. Forms homooligomers and/or heterooligomers.

It localises to the cell membrane. In terms of biological role, mediates both low-affinity uptake and efflux of sugar across the plasma membrane. This is Bidirectional sugar transporter SWEET15 from Vitis vinifera (Grape).